Here is a 117-residue protein sequence, read N- to C-terminus: NADH-ubiquinone oxidoreductase chain 3 (117 aa).

The next 3 membrane-spanning stretches (helical) occupy residues 1–21 (MKFIFMYFIFIILISSILLLL), 58–78 (FLMTMMFLIFDVEIILFLPII), and 86–106 (TMISYLMISIFLILLITTLIL).

This sequence belongs to the complex I subunit 3 family.

It localises to the mitochondrion membrane. It catalyses the reaction a ubiquinone + NADH + 5 H(+)(in) = a ubiquinol + NAD(+) + 4 H(+)(out). Functionally, core subunit of the mitochondrial membrane respiratory chain NADH dehydrogenase (Complex I) that is believed to belong to the minimal assembly required for catalysis. Complex I functions in the transfer of electrons from NADH to the respiratory chain. The immediate electron acceptor for the enzyme is believed to be ubiquinone. The protein is NADH-ubiquinone oxidoreductase chain 3 (ND3) of Apis mellifera ligustica (Common honeybee).